Reading from the N-terminus, the 542-residue chain is Organic anion transporter 3 (542 aa).

The Cytoplasmic portion of the chain corresponds to 1–20 (MTFSEILDRVGSMGRFQFLH). Serine 4 carries the post-translational modification Phosphoserine. Residues 21–41 (VAILGLPILNMANHNLLQIFT) traverse the membrane as a helical segment. Residues 42 to 123 (AATPVHHCRP…LVCNSNKLKE (82 aa)) are Extracellular-facing. Asparagine 86 carries an N-linked (GlcNAc...) asparagine glycan. The chain crosses the membrane as a helical span at residues 124–144 (MAQSIFMAGILIGGLVLGDLS). The Cytoplasmic segment spans residues 145 to 154 (DRFGRRPILT). The helical transmembrane segment at 155–175 (CSYLLLAASGSGAAFSPTFPI) threads the bilayer. Residue tyrosine 176 is a topological domain, extracellular. Residues 177 to 197 (MVFRFLCGFGISGITLSTVIL) traverse the membrane as a helical segment. At 198 to 212 (NVEWVPTRMRAIMST) the chain is on the cytoplasmic side. A helical membrane pass occupies residues 213-233 (ALGYCYTFGQFILPGLAYAIP). Over 234–236 (QWR) the chain is Extracellular. A helical membrane pass occupies residues 237 to 257 (WLQLTVSIPFFIFFLSSWWTP). Over 258-327 (ESIRWLVLSG…FRIPMLRRMT (70 aa)) the chain is Cytoplasmic. A helical membrane pass occupies residues 328-348 (FCLSLAWFATGFAYYSLAMGV). Over 349 to 354 (EEFGVN) the chain is Extracellular. A helical membrane pass occupies residues 355–375 (LYILQIIFGGVDVPAKFITIL). Residues 376-386 (SLSYLGRHTTQ) lie on the Cytoplasmic side of the membrane. Residues 387–407 (AAALLLAGGAILALTFVPLDL) traverse the membrane as a helical segment. The Extracellular portion of the chain corresponds to 408–471 (QTVRTVLAVF…LVKITGEVQP (64 aa)). Residues 472-492 (FIPNIIYGITALLGGSAAFFL) form a helical membrane-spanning segment. Residues 493–542 (PETLNQPLPETIEDLENWSLRAKKPKQEPEVEKASQRIPLQPHGPGLGSS) are Cytoplasmic-facing. Residues 515–542 (KKPKQEPEVEKASQRIPLQPHGPGLGSS) are disordered. The span at 517 to 527 (PKQEPEVEKAS) shows a compositional bias: basic and acidic residues.

The protein belongs to the major facilitator (TC 2.A.1) superfamily. Organic cation transporter (TC 2.A.1.19) family.

It localises to the basolateral cell membrane. It catalyses the reaction estrone 3-sulfate(out) + glutarate(in) = estrone 3-sulfate(in) + glutarate(out). It carries out the reaction estrone 3-sulfate(in) + 2-oxoglutarate(out) = estrone 3-sulfate(out) + 2-oxoglutarate(in). The catalysed reaction is glutarate(in) + 2-oxoglutarate(out) = glutarate(out) + 2-oxoglutarate(in). The enzyme catalyses urate(in) + 2-oxoglutarate(out) = urate(out) + 2-oxoglutarate(in). It catalyses the reaction taurocholate(out) + glutarate(in) = taurocholate(in) + glutarate(out). It carries out the reaction dehydroepiandrosterone 3-sulfate(out) + glutarate(in) = dehydroepiandrosterone 3-sulfate(in) + glutarate(out). The catalysed reaction is prostaglandin F2alpha(out) + glutarate(in) = prostaglandin F2alpha(in) + glutarate(out). The enzyme catalyses prostaglandin F2alpha(out) + 2-oxoglutarate(in) = prostaglandin F2alpha(in) + 2-oxoglutarate(out). It catalyses the reaction (R)-carnitine(out) + 2-oxoglutarate(in) = (R)-carnitine(in) + 2-oxoglutarate(out). It carries out the reaction glutarate(in) + (R)-carnitine(out) = glutarate(out) + (R)-carnitine(in). The catalysed reaction is prostaglandin E2(out) + 2-oxoglutarate(in) = prostaglandin E2(in) + 2-oxoglutarate(out). The enzyme catalyses prostaglandin E2(out) + glutarate(in) = prostaglandin E2(in) + glutarate(out). It catalyses the reaction urate(in) + glutarate(out) = urate(out) + glutarate(in). It carries out the reaction taurocholate(out) + 2-oxoglutarate(in) = taurocholate(in) + 2-oxoglutarate(out). The catalysed reaction is dehydroepiandrosterone 3-sulfate(out) + 2-oxoglutarate(in) = dehydroepiandrosterone 3-sulfate(in) + 2-oxoglutarate(out). The enzyme catalyses kynurenate(out) + a dicarboxylate(in) = kynurenate(in) + a dicarboxylate(out). It catalyses the reaction (indol-3-yl)acetate(out) + a dicarboxylate(in) = (indol-3-yl)acetate(in) + a dicarboxylate(out). It carries out the reaction indoxyl sulfate(out) + a dicarboxylate(in) = indoxyl sulfate(in) + a dicarboxylate(out). The catalysed reaction is N-benzoylglycine(out) + a dicarboxylate(in) = N-benzoylglycine(in) + a dicarboxylate(out). The enzyme catalyses 3-carboxy-4-methyl-5-propyl-2-furanpropanoate(out) + a dicarboxylate(in) = 3-carboxy-4-methyl-5-propyl-2-furanpropanoate(in) + a dicarboxylate(out). It catalyses the reaction (6R)-L-erythro-5,6,7,8-tetrahydrobiopterin(out) + a dicarboxylate(in) = (6R)-L-erythro-5,6,7,8-tetrahydrobiopterin(in) + a dicarboxylate(out). It carries out the reaction L-erythro-7,8-dihydrobiopterin(out) + a dicarboxylate(in) = L-erythro-7,8-dihydrobiopterin(in) + a dicarboxylate(out). The catalysed reaction is L-sepiapterin(out) + a dicarboxylate(in) = L-sepiapterin(in) + a dicarboxylate(out). In terms of biological role, functions as an organic anion/dicarboxylate exchanger that couples organic anion uptake indirectly to the sodium gradient. Transports organic anions such as estrone 3-sulfate (E1S) and urate in exchange for dicarboxylates such as glutarate or ketoglutarate (2-oxoglutarate). Plays an important role in the excretion of endogenous and exogenous organic anions, especially from the kidney and the brain. E1S transport is pH- and chloride-dependent and may also involve E1S/cGMP exchange. Responsible for the transport of prostaglandin E2 (PGE2) and prostaglandin F2(alpha) (PGF2(alpha)) in the basolateral side of the renal tubule. Involved in the transport of neuroactive tryptophan metabolites kynurenate and xanthurenate. Functions as a biopterin transporters involved in the uptake and the secretion of coenzymes tetrahydrobiopterin (BH4), dihydrobiopterin (BH2) and sepiapterin to urine, thereby determining baseline levels of blood biopterins. May be involved in the basolateral transport of steviol, a metabolite of the popular sugar substitute stevioside. May participate in the detoxification/ renal excretion of drugs and xenobiotics, such as the histamine H(2)-receptor antagonists fexofenadine and cimetidine, the antibiotic benzylpenicillin (PCG), the anionic herbicide 2,4-dichloro-phenoxyacetate (2,4-D), the diagnostic agent p-aminohippurate (PAH), the antiviral acyclovir (ACV), and the mycotoxin ochratoxin (OTA), by transporting these exogenous organic anions across the cell membrane in exchange for dicarboxylates such as 2-oxoglutarate. Contributes to the renal uptake of potent uremic toxins (indoxyl sulfate (IS), indole acetate (IA), hippurate/N-benzoylglycine (HA) and 3-carboxy-4-methyl-5-propyl-2-furanpropionate (CMPF)), pravastatin, PCG, E1S and dehydroepiandrosterone sulfate (DHEAS), and is partly involved in the renal uptake of temocaprilat (an angiotensin-converting enzyme (ACE) inhibitor). May contribute to the release of cortisol in the adrenals. Involved in one of the detoxification systems on the choroid plexus (CP), removes substrates such as E1S or taurocholate (TC), PCG, 2,4-D and PAH, from the cerebrospinal fluid (CSF) to the blood for eventual excretion in urine and bile. Also contributes to the uptake of several other organic compounds such as the prostanoids prostaglandin E(2) and prostaglandin F(2-alpha), L-carnitine, and the therapeutic drugs allopurinol, 6-mercaptopurine (6-MP) and 5-fluorouracil (5-FU). Mediates the transport of PAH, PCG, and the statins pravastatin and pitavastatin, from the cerebrum into the blood circulation across the blood-brain barrier (BBB). In summary, plays a role in the efflux of drugs and xenobiotics, helping reduce their undesired toxicological effects on the body. This is Organic anion transporter 3 (SLC22A8) from Pongo abelii (Sumatran orangutan).